Consider the following 67-residue polypeptide: Beta-defensin 9 (67 aa).

Positions 1–24 (MRTLCSLLLICCLLFSYTTPAANS) are cleaved as a signal peptide. 3 disulfide bridges follow: Cys34/Cys62, Cys41/Cys55, and Cys45/Cys63.

It belongs to the beta-defensin family. As to expression, weakly expressed in adult and neonatal brain.

The protein localises to the secreted. Functionally, has antibacterial activity. This is Beta-defensin 9 (Defb9) from Mus musculus (Mouse).